A 288-amino-acid chain; its full sequence is Diaminopimelate epimerase (288 aa).

The substrate site is built by Asn14 and Asn67. The Proton donor role is filled by Cys76. Residues 77-78 (GN), Asn166, Asn199, and 217-218 (ER) each bind substrate. Catalysis depends on Cys226, which acts as the Proton acceptor. 227–228 (GT) lines the substrate pocket.

Belongs to the diaminopimelate epimerase family. Homodimer.

Its subcellular location is the cytoplasm. The catalysed reaction is (2S,6S)-2,6-diaminopimelate = meso-2,6-diaminopimelate. It functions in the pathway amino-acid biosynthesis; L-lysine biosynthesis via DAP pathway; DL-2,6-diaminopimelate from LL-2,6-diaminopimelate: step 1/1. In terms of biological role, catalyzes the stereoinversion of LL-2,6-diaminopimelate (L,L-DAP) to meso-diaminopimelate (meso-DAP), a precursor of L-lysine and an essential component of the bacterial peptidoglycan. The polypeptide is Diaminopimelate epimerase (Bacillus cytotoxicus (strain DSM 22905 / CIP 110041 / 391-98 / NVH 391-98)).